The primary structure comprises 530 residues: Phosphoenolpyruvate carboxykinase (ATP) (530 aa).

Arginine 58, tyrosine 195, and lysine 201 together coordinate substrate. Residues lysine 201, histidine 220, and 236 to 244 (GLSGTGKTT) each bind ATP. Residues lysine 201 and histidine 220 each coordinate Mn(2+). A Mn(2+)-binding site is contributed by aspartate 257. ATP contacts are provided by residues glutamate 285, arginine 321, 440–441 (RI), and threonine 446. Position 321 (arginine 321) interacts with substrate.

Belongs to the phosphoenolpyruvate carboxykinase (ATP) family. It depends on Mn(2+) as a cofactor.

The protein localises to the cytoplasm. It catalyses the reaction oxaloacetate + ATP = phosphoenolpyruvate + ADP + CO2. It participates in carbohydrate biosynthesis; gluconeogenesis. Its function is as follows. Involved in the gluconeogenesis. Catalyzes the conversion of oxaloacetate (OAA) to phosphoenolpyruvate (PEP) through direct phosphoryl transfer between the nucleoside triphosphate and OAA. This Staphylococcus haemolyticus (strain JCSC1435) protein is Phosphoenolpyruvate carboxykinase (ATP).